Consider the following 926-residue polypeptide: Rap guanine nucleotide exchange factor 3 (926 aa).

A Phosphoserine modification is found at serine 79. The DEP domain occupies 110-186 (ATYPTLIRDR…RDAQFYRFPG (77 aa)). The interval 218 to 242 (TVALRKSPGQRTDEELDLIFEELVH) is interaction with PDE3B. Residues 311-314 (GQLA) and 321-322 (RA) each bind 3',5'-cyclic AMP. The interval 369–388 (TSQGAGPSRPPTPGRNRYTV) is disordered. Residues 384–521 (NRYTVMSGTP…EQYPERRRHH (138 aa)) enclose the N-terminal Ras-GEF domain. Residues 398 to 422 (ELLLEAMRPDSSAHDPTETFLSDFL) are interaction with PDE3B. Phosphoserine occurs at positions 531 and 867. The Ras-GEF domain occupies 665 to 892 (SAKDLAGQLT…SRISTCSEQS (228 aa)).

In terms of assembly, interacts with PDE3B and PIK3R6; form a signaling complex that regulates phosphatidylinositol 3-kinase gamma in angiogenesis. As to expression, expressed at low levels in adult brain. Strongly expressed in parts of the neonatal brain, including the septum and the thalamus.

It localises to the cytoplasm. The protein resides in the membrane. Guanine nucleotide exchange factor (GEF) for RAP1A and RAP2A small GTPases that is activated by binding cAMP. Through simultaneous binding of PDE3B to RAPGEF3 and PIK3R6 is assembled in a signaling complex in which it activates the PI3K gamma complex and which is involved in angiogenesis. Plays a role in the modulation of the cAMP-induced dynamic control of endothelial barrier function through a pathway that is independent on Rho-mediated signaling. Required for the actin rearrangement at cell-cell junctions, such as stress fibers and junctional actin. This Rattus norvegicus (Rat) protein is Rap guanine nucleotide exchange factor 3 (Rapgef3).